A 151-amino-acid polypeptide reads, in one-letter code: Alpha-latroinsectotoxin-Lh1a (151 aa).

8 ANK repeats span residues 21 to 37 (TDVTQTLIDITEIDLNA), 41 to 52 (ILIRNTNAVINI), 56 to 80 (VGLTPLHLATLQNNLSVSKGAYLND), 84 to 104 (NGMTPLHYAAMTGNLEMVDFL), 105 to 116 (KWTPLHLAILFK), 117 to 125 (QLVIELLAK), 126 to 146 (TFFDLAIENGRLNIVAFAVEK), and 147 to 151 (YIAAR).

The protein belongs to the cationic peptide 01 (latrotoxin) family. 02 (alpha-latroinsectotoxin) subfamily. Homotetramer in membranes. As to expression, expressed by the venom gland.

Its subcellular location is the secreted. It localises to the target cell membrane. Functionally, insecticidal presynaptic neurotoxin that induces massive neurotransmitter release at insect (but not vertebrate) neuromuscular junctions. Native toxin forms cation-permeable pores (with high permeability to calcium) in lipid membranes locust muscle membrane and artificial lipid bilayers. May bind to insect neurexin-1 homolog, insect adhesion G protein-coupled receptor L1 homolog, and insect receptor-type tyrosine-protein phosphatase S homolog, and induces neurotransmitter exocytosis both by forming tetrameric pores in membranes and signaling via G protein-coupled receptor. Oligomerization is a process independent of divalent cations. The toxin forms channels with 0.55-0.58 nm entrance diameter and a relatively small conductance in planar phospholipid membranes. The protein is Alpha-latroinsectotoxin-Lh1a of Latrodectus hasselti (Redback spider).